The primary structure comprises 277 residues: Large ribosomal subunit protein uL2 (277 aa).

The disordered stretch occupies residues Val223–Lys277.

It belongs to the universal ribosomal protein uL2 family. In terms of assembly, part of the 50S ribosomal subunit. Forms a bridge to the 30S subunit in the 70S ribosome.

Its function is as follows. One of the primary rRNA binding proteins. Required for association of the 30S and 50S subunits to form the 70S ribosome, for tRNA binding and peptide bond formation. It has been suggested to have peptidyltransferase activity; this is somewhat controversial. Makes several contacts with the 16S rRNA in the 70S ribosome. In Nitrobacter hamburgensis (strain DSM 10229 / NCIMB 13809 / X14), this protein is Large ribosomal subunit protein uL2.